A 174-amino-acid chain; its full sequence is SUSHI domain-containing protein E3 (174 aa).

An N-terminal signal peptide occupies residues 1–20 (MATEVQFACALVVLLGCGYA). The region spanning 35-97 (QNCTTYPSIE…WTNGPPSCVK (63 aa)) is the Sushi domain. Cystine bridges form between C37–C78 and C64–C95. Low complexity predominate over residues 108-127 (STSTTPVTTGTFPDPQNTTH). The interval 108–133 (STSTTPVTTGTFPDPQNTTHPTHHTV) is disordered. The helical transmembrane segment at 145-165 (FGYTPWAIITLVVIILLVVWI) threads the bilayer.

It localises to the host membrane. This chain is SUSHI domain-containing protein E3 (E3), found in Equine herpesvirus 2 (strain 86/87) (EHV-2).